The primary structure comprises 372 residues: MSLRCGGAVRTVGPRVFGRYVFSPVREVSFLPDEKKEFLQSGPDLQEFISGNLADKSTWDEYKGNLKRQKGERLRLPPWLKTEIPMGKNYNKLKNTLRNLNLHTVCEEARCPNIGECWGGGEYATATATIMLMGDTCTRGCRFCSVKTARNPPPLDANEPYNTAKAIAEWGLDYVVLTSVDRDDMPDGGAEHFAKTVSYLKERNPKILVECLTPDFRGDLKAIEKVALSGLDVYAHNVETVPELQRKVRDPRANFDQSLRVLKHAKEVRPDVISKTSIMLGLGENDEQVYATMKALREADVDCLTLGQYMQPTKRHLKVEEYITPEKFKYWEKVGNELGFHYTASGPLVRSSYKAGEFFLKNLVAKRKTKAL.

The transit peptide at 1–27 (MSLRCGGAVRTVGPRVFGRYVFSPVRE) directs the protein to the mitochondrion. Cys106, Cys111, Cys117, Cys137, Cys141, Cys144, and Ser352 together coordinate [4Fe-4S] cluster. The Radical SAM core domain maps to 122 to 341 (EYATATATIM…EKVGNELGFH (220 aa)).

The protein belongs to the radical SAM superfamily. Lipoyl synthase family. [4Fe-4S] cluster is required as a cofactor.

Its subcellular location is the mitochondrion. The enzyme catalyses [[Fe-S] cluster scaffold protein carrying a second [4Fe-4S](2+) cluster] + N(6)-octanoyl-L-lysyl-[protein] + 2 oxidized [2Fe-2S]-[ferredoxin] + 2 S-adenosyl-L-methionine + 4 H(+) = [[Fe-S] cluster scaffold protein] + N(6)-[(R)-dihydrolipoyl]-L-lysyl-[protein] + 4 Fe(3+) + 2 hydrogen sulfide + 2 5'-deoxyadenosine + 2 L-methionine + 2 reduced [2Fe-2S]-[ferredoxin]. It functions in the pathway protein modification; protein lipoylation via endogenous pathway; protein N(6)-(lipoyl)lysine from octanoyl-[acyl-carrier-protein]: step 2/2. Its function is as follows. Catalyzes the radical-mediated insertion of two sulfur atoms into the C-6 and C-8 positions of the octanoyl moiety bound to the lipoyl domains of lipoate-dependent enzymes, thereby converting the octanoylated domains into lipoylated derivatives. The protein is Lipoyl synthase, mitochondrial of Bos taurus (Bovine).